A 216-amino-acid polypeptide reads, in one-letter code: Translation initiation factor 6 (216 aa).

The protein belongs to the eIF-6 family.

Binds to the 50S ribosomal subunit and prevents its association with the 30S ribosomal subunit to form the 70S initiation complex. The chain is Translation initiation factor 6 from Thermoplasma acidophilum (strain ATCC 25905 / DSM 1728 / JCM 9062 / NBRC 15155 / AMRC-C165).